Consider the following 377-residue polypeptide: tRNA-specific 2-thiouridylase MnmA (377 aa).

ATP-binding positions include G12 to S19 and M38. The tract at residues N98–D100 is interaction with target base in tRNA. The Nucleophile role is filled by C103. Cysteines 103 and 200 form a disulfide. G127 contributes to the ATP binding site. The segment at K150–Q152 is interaction with tRNA. C200 functions as the Cysteine persulfide intermediate in the catalytic mechanism. The segment at R313–Y314 is interaction with tRNA.

This sequence belongs to the MnmA/TRMU family.

It localises to the cytoplasm. It carries out the reaction S-sulfanyl-L-cysteinyl-[protein] + uridine(34) in tRNA + AH2 + ATP = 2-thiouridine(34) in tRNA + L-cysteinyl-[protein] + A + AMP + diphosphate + H(+). Functionally, catalyzes the 2-thiolation of uridine at the wobble position (U34) of tRNA, leading to the formation of s(2)U34. The protein is tRNA-specific 2-thiouridylase MnmA of Pediococcus pentosaceus (strain ATCC 25745 / CCUG 21536 / LMG 10740 / 183-1w).